Reading from the N-terminus, the 231-residue chain is Large ribosomal subunit protein uL1 (231 aa).

The protein belongs to the universal ribosomal protein uL1 family. In terms of assembly, part of the 50S ribosomal subunit.

Functionally, binds directly to 23S rRNA. The L1 stalk is quite mobile in the ribosome, and is involved in E site tRNA release. Its function is as follows. Protein L1 is also a translational repressor protein, it controls the translation of the L11 operon by binding to its mRNA. The protein is Large ribosomal subunit protein uL1 of Teredinibacter turnerae (strain ATCC 39867 / T7901).